The chain runs to 180 residues: Interleukin-17B (180 aa).

A signal peptide spans 1-22 (MDWPHSLLFLLAISIFLAPSHP). The tract at residues 22-44 (PRNTKGKRKGQGRPSPLAPGPHQ) is disordered. Basic residues predominate over residues 23–32 (RNTKGKRKGQ). A glycan (N-linked (GlcNAc...) asparagine) is linked at Asn75. 2 cysteine pairs are disulfide-bonded: Cys121/Cys176 and Cys126/Cys178.

The protein belongs to the IL-17 family.

It localises to the secreted. Its function is as follows. Stimulates the release of tumor necrosis factor alpha and IL-1-beta from the monocytic cell line THP-1. The protein is Interleukin-17B (Il17b) of Mus musculus (Mouse).